A 435-amino-acid polypeptide reads, in one-letter code: Nucleosome assembly protein 1 (435 aa).

The segment at Met-1–Gly-51 is disordered. Position 16 is a phosphoserine (Ser-16). The segment covering Pro-19 to Asp-50 has biased composition (polar residues). Phosphothreonine is present on residues Thr-20 and Thr-24. Ser-27 carries the post-translational modification Phosphoserine. Position 29 is a phosphothreonine (Thr-29). Phosphoserine is present on residues Ser-31 and Ser-35. Phosphothreonine is present on Thr-42. Ser-46 is subject to Phosphoserine. At Thr-52 the chain carries Phosphothreonine. Acidic residues-rich tracts occupy residues Pro-146 to Gln-185 and Glu-338 to Leu-355. Disordered stretches follow at residues Pro-146–Ile-187 and Glu-308–Gln-435. A compositionally biased stretch (basic and acidic residues) spans Glu-356–Ile-374. Residues Val-386–Ala-421 are compositionally biased toward acidic residues.

Belongs to the nucleosome assembly protein (NAP) family. Component of the GIN4 complex which forms a ring at the bud neck. Phosphorylation is cell cycle dependent and is important for its bud neck localization. Phosphorylation is highest in newly collected G1 cells, declines when the cells are traversing through the G1 phase, and reaches the lowest level around the time of bud emergence. Phosphorylation increases and remains high through the rest of the cell cycle until the beginning of the next one, when it decreases again. Phosphorylation involves two septin ring-associated kinases, CLA4 and GIN4, and its dephosphorylation occurs at the septin ring in a manner dependent on the phosphatases PP2A and CDC14.

Its subcellular location is the bud neck. The protein localises to the bud tip. Functionally, acidic protein, which assembles histones into an octamer. Involved in the regulation of the localization and the function of the septins during mitosis. The chain is Nucleosome assembly protein 1 (NAP1) from Candida albicans (strain SC5314 / ATCC MYA-2876) (Yeast).